The primary structure comprises 263 residues: Putative TATA-binding protein pB263R (263 aa).

This sequence belongs to the asfivirus B263R family.

Functionally, putative TATA-binding protein. The chain is Putative TATA-binding protein pB263R from Ornithodoros (relapsing fever ticks).